Consider the following 354-residue polypeptide: Sorbitol dehydrogenase (354 aa).

Zn(2+) is bound at residue cysteine 43. Tyrosine 49 contributes to the substrate binding site. Residues histidine 67 and glutamate 68 each coordinate Zn(2+). Glutamate 153 provides a ligand contact to substrate. Isoleucine 181, aspartate 201, and arginine 206 together coordinate NAD(+). Serine 208 and serine 222 each carry phosphoserine. NAD(+) is bound by residues 270-272 (VGL) and 294-296 (VFR). Residues arginine 296 and tyrosine 297 each contribute to the substrate site.

Belongs to the zinc-containing alcohol dehydrogenase family. Homotetramer. Zn(2+) is required as a cofactor. In terms of tissue distribution, expressed in liver.

It is found in the mitochondrion membrane. Its subcellular location is the cell projection. The protein localises to the cilium. The protein resides in the flagellum. It catalyses the reaction xylitol + NAD(+) = D-xylulose + NADH + H(+). The catalysed reaction is L-iditol + NAD(+) = keto-L-sorbose + NADH + H(+). It carries out the reaction keto-D-fructose + NADH + H(+) = D-sorbitol + NAD(+). In terms of biological role, polyol dehydrogenase that catalyzes the reversible NAD(+)-dependent oxidation of various sugar alcohols. Is mostly active with xylitol, L-iditol and D-sorbitol (D-glucitol) as substrates, leading to the C2-oxidized products D-xylulose, L-sorbose and D-fructose, respectively. Is a key enzyme in the polyol pathway that interconverts glucose and fructose via sorbitol, which constitutes an important alternate route for glucose metabolism. May play a role in sperm motility by using sorbitol as an alternative energy source for sperm motility. In Ovis aries (Sheep), this protein is Sorbitol dehydrogenase (SORD).